Here is a 220-residue protein sequence, read N- to C-terminus: Ras-related protein Rab-3A (220 aa).

GTP is bound by residues Ser31, Ser32, Val33, Gly34, Lys35, Thr36, Ser37, Thr48, Pro49, Ser53, and Thr54. Residue Thr36 participates in Mg(2+) binding. The Switch 1 signature appears at 49-58 (PAFVSTVGID). 2 residues coordinate Mg(2+): Thr54 and Asp77. Gly80 is a binding site for GTP. The Switch 2 signature appears at 80-96 (GQERYRTITTAYYRGAM). Residue Thr86 is modified to Phosphothreonine; by LRRK2. 5 residues coordinate GTP: Asn135, Lys136, Asp138, Ala166, and Lys167. Residues Ser188 and Ser190 each carry the phosphoserine modification. The tract at residues 194–220 (ADPAVTGAKQGPQLSDQQVPPHQDCAC) is disordered. Residues Cys218 and Cys220 are each lipidated (S-geranylgeranyl cysteine). Cys220 carries the post-translational modification Cysteine methyl ester.

The protein belongs to the small GTPase superfamily. Rab family. As to quaternary structure, interacts with RIMS1 and RIMS2. Interacts with Rabphilin-3A/RPH3A and Rab effector Noc2/RPH3AL. Interacts with SYTL4. Interacts with RAB3IP. Interacts with SGSM1 and SGSM3. Interacts with SYT1. Interacts with MYH9; this interaction is essential for lysosome exocytosis and plasma membrane repair. Interacts with STXBP1; this interaction promotes RAB3A dissociation from the vesicle membrane. Interacts with SNCA. The GTP-bound form interacts with REP15. Interacts with GDI1, GDI2, CHM and CHML; phosphorylation at Thr-86 disrupts these interactions. Interacts with MADD (via uDENN domain); the GTP-bound form is preferred for interaction. Mg(2+) is required as a cofactor. Post-translationally, phosphorylation of Thr-86 in the switch II region by LRRK2 prevents the association of RAB regulatory proteins, including CHM, CHML and RAB GDP dissociation inhibitors GDI1 and GDI2. In terms of tissue distribution, specifically expressed in brain.

The protein resides in the cytoplasm. Its subcellular location is the cytosol. It is found in the lysosome. The protein localises to the cytoplasmic vesicle. It localises to the secretory vesicle. The protein resides in the cell projection. Its subcellular location is the axon. It is found in the cell membrane. The protein localises to the presynapse. It localises to the postsynapse. It carries out the reaction GTP + H2O = GDP + phosphate + H(+). With respect to regulation, regulated by guanine nucleotide exchange factors (GEFs) including RAB3IL1 and MADD which promote the exchange of bound GDP for free GTP. Regulated by GTPase activating proteins (GAPs) including RAB3GAP1 and TBC1D10B which increase the GTP hydrolysis activity. Inhibited by GDP dissociation inhibitors (GDIs) which prevent Rab-GDP dissociation. The small GTPases Rab are key regulators of intracellular membrane trafficking, from the formation of transport vesicles to their fusion with membranes. Rabs cycle between an inactive GDP-bound form and an active GTP-bound form that is able to recruit to membranes different sets of downstream effectors directly responsible for vesicle formation, movement, tethering and fusion. RAB3A plays a central role in regulated exocytosis and secretion. Controls the recruitment, tethering and docking of secretory vesicles to the plasma membrane. Upon stimulation, switches to its active GTP-bound form, cycles to vesicles and recruits effectors such as RIMS1, RIMS2, Rabphilin-3A/RPH3A, RPH3AL or SYTL4 to help the docking of vesicules onto the plasma membrane. Upon GTP hydrolysis by GTPase-activating protein, dissociates from the vesicle membrane allowing the exocytosis to proceed. Stimulates insulin secretion through interaction with RIMS2 or RPH3AL effectors in pancreatic beta cells. Regulates calcium-dependent lysosome exocytosis and plasma membrane repair (PMR) via the interaction with 2 effectors, SYTL4 and myosin-9/MYH9. Acts as a positive regulator of acrosome content secretion in sperm cells by interacting with RIMS1. Also plays a role in the regulation of dopamine release by interacting with synaptotagmin I/SYT. The sequence is that of Ras-related protein Rab-3A from Homo sapiens (Human).